A 750-amino-acid polypeptide reads, in one-letter code: Polyribonucleotide nucleotidyltransferase (750 aa).

Mg(2+) is bound by residues Asp523 and Asp529. The 60-residue stretch at Pro589–Ile648 folds into the KH domain. One can recognise an S1 motif domain in the interval Gly660 to Val729.

Belongs to the polyribonucleotide nucleotidyltransferase family. Mg(2+) serves as cofactor.

The protein resides in the cytoplasm. The catalysed reaction is RNA(n+1) + phosphate = RNA(n) + a ribonucleoside 5'-diphosphate. Involved in mRNA degradation. Catalyzes the phosphorolysis of single-stranded polyribonucleotides processively in the 3'- to 5'-direction. In Saccharopolyspora erythraea (strain ATCC 11635 / DSM 40517 / JCM 4748 / NBRC 13426 / NCIMB 8594 / NRRL 2338), this protein is Polyribonucleotide nucleotidyltransferase.